The chain runs to 461 residues: Ribitol-5-phosphate transferase FKTN (461 aa).

Residues 1–7 are Cytoplasmic-facing; that stretch reads MSRINKN. Positions 6-27 are required and sufficient for interaction with POMGNT1; it reads KNVVLALLTLTSSAFLLFQLYY. A helical; Signal-anchor for type II membrane protein membrane pass occupies residues 8-28; it reads VVLALLTLTSSAFLLFQLYYY. The Lumenal segment spans residues 29-461; that stretch reads KHYLSTRNGA…SEWDEVIQLY (433 aa). Residue asparagine 92 is glycosylated (N-linked (GlcNAc...) asparagine).

It belongs to the LicD transferase family. As to quaternary structure, forms a complex composed of FKTN/fukutin, FKRP and RXYLT1/TMEM5. Interacts (via transmembrane domain) with POMGNT1; the interaction is direct and is required for normal POMGNT1 location in Golgi membranes. As to expression, expressed in the retina (at protein level).

It localises to the golgi apparatus membrane. It is found in the cytoplasm. The protein localises to the nucleus. It carries out the reaction 3-O-[beta-D-GalNAc-(1-&gt;3)-beta-D-GlcNAc-(1-&gt;4)-(O-6-P-alpha-D-Man)]-Thr-[protein] + CDP-L-ribitol = 3-O-[Rib-ol-P-3-beta-D-GalNAc-(1-&gt;3)-beta-D-GlcNAc-(1-&gt;4)-(O-6-P-alpha-D-Man)]-Thr-[protein] + CMP + H(+). The protein operates within protein modification; protein glycosylation. Catalyzes the transfer of CDP-ribitol to the distal N-acetylgalactosamine of the phosphorylated O-mannosyl trisaccharide (N-acetylgalactosamine-beta-3-N-acetylglucosamine-beta-4-(phosphate-6-)mannose), a carbohydrate structure present in alpha-dystroglycan (DAG1). This constitutes the first step in the formation of the ribitol 5-phosphate tandem repeat which links the phosphorylated O-mannosyl trisaccharide to the ligand binding moiety composed of repeats of 3-xylosyl-alpha-1,3-glucuronic acid-beta-1. May interact with and reinforce a large complex encompassing the outside and inside of muscle membranes. Could be involved in brain development. This is Ribitol-5-phosphate transferase FKTN from Macaca fascicularis (Crab-eating macaque).